A 345-amino-acid chain; its full sequence is GTP cyclohydrolase-2 (345 aa).

The interval 1–27 (MTIDNYDNSKQDSSKYEVSGTGDGRNG) is disordered. 143–147 (RIHSE) is a binding site for GTP. Residues C148, C159, and C161 each coordinate Zn(2+). Residues Q164, 197–199 (EGR), and T219 each bind GTP. D231 serves as the catalytic Proton acceptor. R233 (nucleophile) is an active-site residue. Residues T254 and K259 each coordinate GTP. Positions 312–345 (PLKLHTNPQPTETSEAQNQNRMNSALSSTSTLAI) are disordered. Over residues 317–345 (TNPQPTETSEAQNQNRMNSALSSTSTLAI) the composition is skewed to polar residues.

This sequence belongs to the GTP cyclohydrolase II family. The cofactor is Zn(2+).

It carries out the reaction GTP + 4 H2O = 2,5-diamino-6-hydroxy-4-(5-phosphoribosylamino)-pyrimidine + formate + 2 phosphate + 3 H(+). It functions in the pathway cofactor biosynthesis; riboflavin biosynthesis; 5-amino-6-(D-ribitylamino)uracil from GTP: step 1/4. Its function is as follows. Catalyzes the conversion of GTP to 2,5-diamino-6-ribosylamino-4(3H)-pyrimidinone 5'-phosphate (DARP), formate and pyrophosphate. This is GTP cyclohydrolase-2 (RIB1) from Saccharomyces cerevisiae (strain ATCC 204508 / S288c) (Baker's yeast).